The following is an 80-amino-acid chain: uncharacterized protein (80 aa).

The helical transmembrane segment at 12–32 (FKIIALILLIVLIINLSYKLF) threads the bilayer.

It localises to the membrane. This is an uncharacterized protein from Saccharomyces cerevisiae (strain ATCC 204508 / S288c) (Baker's yeast).